A 700-amino-acid polypeptide reads, in one-letter code: Elongation factor G (700 aa).

Residues 10–286 (NKVRNIGIMA…AVIDYLPNPL (277 aa)) form the tr-type G domain. GTP contacts are provided by residues 19–26 (AHIDAGKT), 83–87 (DTPGH), and 137–140 (NKMD).

This sequence belongs to the TRAFAC class translation factor GTPase superfamily. Classic translation factor GTPase family. EF-G/EF-2 subfamily.

The protein localises to the cytoplasm. Its function is as follows. Catalyzes the GTP-dependent ribosomal translocation step during translation elongation. During this step, the ribosome changes from the pre-translocational (PRE) to the post-translocational (POST) state as the newly formed A-site-bound peptidyl-tRNA and P-site-bound deacylated tRNA move to the P and E sites, respectively. Catalyzes the coordinated movement of the two tRNA molecules, the mRNA and conformational changes in the ribosome. The chain is Elongation factor G from Rhodococcus jostii (strain RHA1).